The sequence spans 730 residues: uncharacterized protein (730 aa).

The segment covering 615-625 has biased composition (basic and acidic residues); that stretch reads FDKENSFDPSD. 2 disordered regions span residues 615-667 and 684-730; these read FDKE…SSFS and KSGS…FGKI. Composition is skewed to low complexity over residues 653-667 and 684-701; these read SSSS…SSFS and KSGS…NSSS. Residues 713 to 723 are compositionally biased toward basic residues; the sequence is KKKKKKKKKKS.

This is an uncharacterized protein from Saccharomyces cerevisiae (strain ATCC 204508 / S288c) (Baker's yeast).